The following is a 240-amino-acid chain: Protein OPG176 (240 aa).

It belongs to the orthopoxvirus OPG176 family. In terms of assembly, tetramer. Interacts with host MYD88, TRF4, TICAM2 and MAL.

Functionally, BCL2-like protein which disrupts the host immune response by inhibiting the TLR4 signaling pathway leading to NF-kappa-B activation. Acts close to the plasma membrane and targets several host TIR-domain containing adapter proteins including MYD88, TIRAP, TRIF and TICAM2. In turn, blocks the host NF-kappa-B and TRIF-mediated IRF3 activation. The polypeptide is Protein OPG176 (OPG176) (Bos taurus (Bovine)).